The following is a 67-amino-acid chain: UPF0437 protein y4xE (67 aa).

The protein belongs to the UPF0437 family.

This chain is UPF0437 protein y4xE, found in Sinorhizobium fredii (strain NBRC 101917 / NGR234).